A 319-amino-acid polypeptide reads, in one-letter code: Olfactory receptor 8U8 (319 aa).

Topologically, residues 1 to 28 (MAHINCTQATEFILVGLTDHQELKMPLF) are extracellular. Asn-5 carries N-linked (GlcNAc...) asparagine glycosylation. Residues 29–49 (VLFLSIYLFTVVGNLGLILLI) form a helical membrane-spanning segment. Over 50 to 56 (RADTSLN) the chain is Cytoplasmic. A helical membrane pass occupies residues 57 to 77 (TPMYFFLSNLAFVDFCYSSVI). At 78-97 (TPKMLGNFLYKQNVISFDAC) the chain is on the extracellular side. The cysteines at positions 97 and 179 are disulfide-linked. A helical membrane pass occupies residues 98-118 (ATQLGCFLTFMVSESLLLASM). Residues 119 to 122 (AYDR) are Cytoplasmic-facing. Residues 123–143 (YVAICNPLLYMVVMTPGICIQ) traverse the membrane as a helical segment. Over 144–204 (LVAVPYSYSF…KQLWILACAG (61 aa)) the chain is Extracellular. The helical transmembrane segment at 205-225 (ITFICSVLIVFVSYMFIIFAI) threads the bilayer. Residues 226-239 (LRMSSAEGRRKAFS) lie on the Cytoplasmic side of the membrane. A helical transmembrane segment spans residues 240–260 (TCSSHMLAVTIFYGTLIFMYL). The Extracellular segment spans residues 261 to 271 (QPSSSHSLDAD). The helical transmembrane segment at 272–292 (KMASVFYTVIIPMLNPLIYSL) threads the bilayer. The Cytoplasmic segment spans residues 293 to 319 (RNKDVKDALKKVIINRNHAFIFLKLRK).

Belongs to the G-protein coupled receptor 1 family.

The protein resides in the cell membrane. Its function is as follows. Odorant receptor. This chain is Olfactory receptor 8U8 (OR8U8), found in Homo sapiens (Human).